The primary structure comprises 361 residues: Queuine tRNA-ribosyltransferase (361 aa).

Asp92 functions as the Proton acceptor in the catalytic mechanism. Residues 92–96 (DSGGF), Asp146, Gln189, and Gly216 each bind substrate. Residues 247–253 (GVGKPAD) are RNA binding. Asp266 serves as the catalytic Nucleophile. The segment at 271-275 (TRSGR) is RNA binding; important for wobble base 34 recognition. The Zn(2+) site is built by Cys304, Cys306, Cys309, and His335.

This sequence belongs to the queuine tRNA-ribosyltransferase family. In terms of assembly, homodimer. Within each dimer, one monomer is responsible for RNA recognition and catalysis, while the other monomer binds to the replacement base PreQ1. Zn(2+) is required as a cofactor.

It carries out the reaction 7-aminomethyl-7-carbaguanine + guanosine(34) in tRNA = 7-aminomethyl-7-carbaguanosine(34) in tRNA + guanine. It participates in tRNA modification; tRNA-queuosine biosynthesis. Catalyzes the base-exchange of a guanine (G) residue with the queuine precursor 7-aminomethyl-7-deazaguanine (PreQ1) at position 34 (anticodon wobble position) in tRNAs with GU(N) anticodons (tRNA-Asp, -Asn, -His and -Tyr). Catalysis occurs through a double-displacement mechanism. The nucleophile active site attacks the C1' of nucleotide 34 to detach the guanine base from the RNA, forming a covalent enzyme-RNA intermediate. The proton acceptor active site deprotonates the incoming PreQ1, allowing a nucleophilic attack on the C1' of the ribose to form the product. After dissociation, two additional enzymatic reactions on the tRNA convert PreQ1 to queuine (Q), resulting in the hypermodified nucleoside queuosine (7-(((4,5-cis-dihydroxy-2-cyclopenten-1-yl)amino)methyl)-7-deazaguanosine). The polypeptide is Queuine tRNA-ribosyltransferase (Rickettsia typhi (strain ATCC VR-144 / Wilmington)).